The chain runs to 97 residues: UPF0223 protein lp_2149 (97 aa).

It belongs to the UPF0223 family.

This chain is UPF0223 protein lp_2149, found in Lactiplantibacillus plantarum (strain ATCC BAA-793 / NCIMB 8826 / WCFS1) (Lactobacillus plantarum).